The sequence spans 127 residues: MTALPTDFLYSEEHEWVNTSAVVEGETVRVGITHIAAEALGDIVFVELPEVGSEVEAGEAFGEVESTKSVSDIYAPVSGEVVAVNEALEDNAGLINEDPYGEGWLYEVKVTEAGELMEAEAYQAANE.

Positions 27–109 (TVRVGITHIA…YGEGWLYEVK (83 aa)) constitute a Lipoyl-binding domain. Lysine 68 carries the N6-lipoyllysine modification.

The protein belongs to the GcvH family. As to quaternary structure, the glycine cleavage system is composed of four proteins: P, T, L and H. (R)-lipoate is required as a cofactor.

The glycine cleavage system catalyzes the degradation of glycine. The H protein shuttles the methylamine group of glycine from the P protein to the T protein. This Corynebacterium jeikeium (strain K411) protein is Glycine cleavage system H protein.